The chain runs to 283 residues: Aldo-keto reductase Mmcs_1938 (283 aa).

Tyr58 (proton donor) is an active-site residue. Gly196, Leu198, Val200, Ile236, Arg238, Ser239, Ala240, Arg244, Ser247, Asn248, and Arg274 together coordinate NADPH.

The protein belongs to the aldo/keto reductase family.

In Mycobacterium sp. (strain MCS), this protein is Aldo-keto reductase Mmcs_1938.